A 92-amino-acid chain; its full sequence is N(2)-fixation sustaining protein CowN (92 aa).

The protein belongs to the CowN family.

Functionally, is required to sustain N(2)-dependent growth in the presence of low levels of carbon monoxide (CO). Probably acts by protecting the N(2) fixation ability of the nitrogenase complex, which is inactivated in the presence of CO. The chain is N(2)-fixation sustaining protein CowN from Cereibacter sphaeroides (strain KD131 / KCTC 12085) (Rhodobacter sphaeroides).